Here is a 158-residue protein sequence, read N- to C-terminus: N-acetylgalactosamine-specific phosphotransferase enzyme IIB component 1 (158 aa).

The region spanning Met-1 to Asp-158 is the PTS EIIB type-4 domain. The active-site Pros-phosphohistidine intermediate is the His-17.

It is found in the cytoplasm. Functionally, the phosphoenolpyruvate-dependent sugar phosphotransferase system (sugar PTS), a major carbohydrate active -transport system, catalyzes the phosphorylation of incoming sugar substrates concomitantly with their translocation across the cell membrane. This system is involved in N-acetylgalactosamine transport. This chain is N-acetylgalactosamine-specific phosphotransferase enzyme IIB component 1 (agaB), found in Escherichia coli (strain K12).